Here is a 194-residue protein sequence, read N- to C-terminus: Naphthalene 1,2-dioxygenase system, small oxygenase component (194 aa).

This sequence belongs to the bacterial ring-hydroxylating dioxygenase beta subunit family. As to quaternary structure, the naphthalene dioxygenase (NDO) multicomponent enzyme system is composed of an electron transfer component and a dioxygenase component (iron sulfur protein (ISP)). The electron transfer component is composed of a ferredoxin reductase (NagAa) and a ferredoxin (NagAb), and the dioxygenase component is formed by a large alpha subunit (NagAc) and a small beta subunit (NagAd).

It functions in the pathway aromatic compound metabolism; naphthalene degradation. Functionally, component of the naphthalene dioxygenase (NDO) multicomponent enzyme system which catalyzes the incorporation of both atoms of molecular oxygen into naphthalene to form cis-(1R,2S)-dihydroxy-1,2-dihydronaphthalene. Also able to use styrene as substrate. The beta subunit seems to have a structural role in the holoenzyme. The sequence is that of Naphthalene 1,2-dioxygenase system, small oxygenase component from Ralstonia sp.